The following is a 568-amino-acid chain: Mannitol 2-dehydrogenase (568 aa).

109–120 (IVHVGVGGFHRA) contacts NAD(+).

This sequence belongs to the mannitol dehydrogenase family. In terms of assembly, monomer.

It catalyses the reaction D-mannitol + NAD(+) = D-fructose + NADH + H(+). Catalyzes the NAD(H)-dependent interconversion of D-fructose and D-mannitol in the mannitol metabolic pathway. This Phaeosphaeria nodorum (strain SN15 / ATCC MYA-4574 / FGSC 10173) (Glume blotch fungus) protein is Mannitol 2-dehydrogenase.